The sequence spans 452 residues: Down-regulator of invasive growth 1 (452 aa).

Disordered regions lie at residues 1-145 (MAVS…SAPA) and 262-311 (RNKR…ADLR). 2 stretches are compositionally biased toward polar residues: residues 12–22 (EDTSIAKSTQD) and 35–53 (KGSSDSNIKNSPGGNSVGQ). The residue at position 45 (Ser-45) is a Phosphoserine. Positions 61-77 (PEEDDSGDKEADHEDSE) are enriched in acidic residues. Positions 81–100 (AKKRKAQPLKNPKKSLKRGR) are enriched in basic residues. 4 stretches are compositionally biased toward polar residues: residues 107 to 116 (LSDSNTNTHG), 124 to 145 (LASSNSAHFPPVANQNVKSAPA), 269 to 281 (SYDSPLSGTASTG), and 291 to 307 (RNSSVGSSANAGPTQQR). Phosphoserine is present on residues Ser-126, Ser-142, Ser-272, and Ser-275. The interaction with FUS3 and KSS1 stretch occupies residues 212-452 (IPPPHMLNKP…KSSSHHRTGK (241 aa)). Ser-330 bears the Phosphoserine mark. The span at 331 to 348 (ANTKARSASTSTSTSTST) shows a compositional bias: low complexity. Residues 331–395 (ANTKARSAST…QRTSQPQQQS (65 aa)) are disordered. A compositionally biased stretch (basic and acidic residues) spans 349–361 (NRDRSSWHEAEPN). Over residues 362-372 (KDEEEGTDLAI) the composition is skewed to acidic residues. Low complexity predominate over residues 378 to 395 (PTPTFTTFQRTSQPQQQS). Thr-379 bears the Phosphothreonine mark. A phosphoserine mark is found at Ser-395 and Ser-428.

Forms a complex with DIG2, STE12 and either FUS3 or KSS1. The interaction of FUS3 with STE12 depends on the presence of both DIG1 and DIG2. STE12 is lost from FUS3/DIG1/DIG2 complex after pheromone treatment. DIG1 and DIG2 have also been reported to interact with CLN1 and CLN2. In terms of processing, phosphorylated by FUS3 and KSS1, in a pheromone-stimulated manner. Phosphorylation reduces the affinity for STE12.

It localises to the nucleus. Functionally, DIG1 and DIG2 are negative regulators of the filamentation and pheromone induced mating program. DIG1 and DIG2 inhibit the transcriptional activity of STE12 by direct protein-protein interaction. DIG1 colocalizes to promoters with STE12 and redistributes with it during induction of filamentation (by butanol) or mating (by pheromone) to program specific genes, but binding of DIG1 to STE12 is reduced by pheromone treatment. The protein is Down-regulator of invasive growth 1 (DIG1) of Saccharomyces cerevisiae (strain ATCC 204508 / S288c) (Baker's yeast).